The following is a 193-amino-acid chain: Orotate phosphoribosyltransferase (193 aa).

114–122 (EDVITTGGS) serves as a coordination point for 5-phospho-alpha-D-ribose 1-diphosphate. 2 residues coordinate orotate: threonine 118 and arginine 146.

The protein belongs to the purine/pyrimidine phosphoribosyltransferase family. PyrE subfamily. Homodimer. The cofactor is Mg(2+).

The catalysed reaction is orotidine 5'-phosphate + diphosphate = orotate + 5-phospho-alpha-D-ribose 1-diphosphate. It functions in the pathway pyrimidine metabolism; UMP biosynthesis via de novo pathway; UMP from orotate: step 1/2. In terms of biological role, catalyzes the transfer of a ribosyl phosphate group from 5-phosphoribose 1-diphosphate to orotate, leading to the formation of orotidine monophosphate (OMP). The sequence is that of Orotate phosphoribosyltransferase from Chlorobium phaeobacteroides (strain DSM 266 / SMG 266 / 2430).